The chain runs to 130 residues: Small ribosomal subunit protein uS9 (130 aa).

The protein belongs to the universal ribosomal protein uS9 family.

This is Small ribosomal subunit protein uS9 from Idiomarina loihiensis (strain ATCC BAA-735 / DSM 15497 / L2-TR).